The sequence spans 216 residues: Probable nicotinate-nucleotide adenylyltransferase (216 aa).

It belongs to the NadD family.

It catalyses the reaction nicotinate beta-D-ribonucleotide + ATP + H(+) = deamido-NAD(+) + diphosphate. The protein operates within cofactor biosynthesis; NAD(+) biosynthesis; deamido-NAD(+) from nicotinate D-ribonucleotide: step 1/1. Catalyzes the reversible adenylation of nicotinate mononucleotide (NaMN) to nicotinic acid adenine dinucleotide (NaAD). In Geobacillus thermodenitrificans (strain NG80-2), this protein is Probable nicotinate-nucleotide adenylyltransferase.